The primary structure comprises 338 residues: Stage V sporulation protein AD (338 aa).

The protein is Stage V sporulation protein AD (spoVAD) of Bacillus subtilis (strain 168).